We begin with the raw amino-acid sequence, 70 residues long: ATP synthase subunit c (70 aa).

2 consecutive transmembrane segments (helical) span residues 5 to 25 and 47 to 67; these read AAAIAIGLAALGAGIGNGLIV and FIGVALVEAIPIIAVVIAFMV.

This sequence belongs to the ATPase C chain family. In terms of assembly, F-type ATPases have 2 components, F(1) - the catalytic core - and F(0) - the membrane proton channel. F(1) has five subunits: alpha(3), beta(3), gamma(1), delta(1), epsilon(1). F(0) has three main subunits: a(1), b(2) and c(10-14). The alpha and beta chains form an alternating ring which encloses part of the gamma chain. F(1) is attached to F(0) by a central stalk formed by the gamma and epsilon chains, while a peripheral stalk is formed by the delta and b chains.

It localises to the cell membrane. Its function is as follows. F(1)F(0) ATP synthase produces ATP from ADP in the presence of a proton or sodium gradient. F-type ATPases consist of two structural domains, F(1) containing the extramembraneous catalytic core and F(0) containing the membrane proton channel, linked together by a central stalk and a peripheral stalk. During catalysis, ATP synthesis in the catalytic domain of F(1) is coupled via a rotary mechanism of the central stalk subunits to proton translocation. Functionally, key component of the F(0) channel; it plays a direct role in translocation across the membrane. A homomeric c-ring of between 10-14 subunits forms the central stalk rotor element with the F(1) delta and epsilon subunits. This chain is ATP synthase subunit c, found in Anoxybacillus flavithermus (strain DSM 21510 / WK1).